Here is a 263-residue protein sequence, read N- to C-terminus: R-spondin-1 (263 aa).

The signal sequence occupies residues 1–20 (MRLGLCVVALVLSWTHLTIS). FU repeat units follow at residues 34–85 (AEGS…GYFD) and 91–135 (MNKC…GSSA). Disulfide bonds link C40–C47, C44–C53, C56–C75, C79–C94, C97–C105, C102–C111, C114–C125, C129–C142, C148–C190, C159–C166, and C199–C206. Residue N137 is glycosylated (N-linked (GlcNAc...) asparagine). In terms of domain architecture, TSP type-1 spans 147–207 (QCEMSEWSPW…RCTVRRVPCP (61 aa)). 2 C-linked (Man) tryptophan glycosylation sites follow: W153 and W156. The tract at residues 206–263 (CPEGQKRRKGGQGRRENANRNLARKESKEAGAGSRRRKGQQQQQQQGTVGPLTSAGPA) is disordered. The segment covering 218-234 (GRRENANRNLARKESKE) has biased composition (basic and acidic residues).

Belongs to the R-spondin family. Interacts with the extracellular domain of FZD8 and LRP6. It however does not form a ternary complex with FZD8 and LRP6. Interacts with WNT1. Binds heparin. Interacts with ZNRF3; promoting indirect interaction between ZNRF3 and LGR4 and membrane clearance of ZNRF3. Interacts with LGR4, LGR5 and LGR6. Identified in a complex composed of RNF43, LGR5 and RSPO1. Interacts (via FU repeats) with KREM1. C-, and N-glycosylated. N-glycosylation at Asn-137, negatively influences its secretion and enhancing effect on Wnt/beta-catenin signaling. C-mannosylation at Trp-156 by DPY19L3 is required for its secretion and regulates the enhancing activity of Wnt signaling. Abundantly expressed in adrenal glands, ovary, testis, thyroid and trachea but not in bone marrow, spinal cord, stomach, leukocytes colon, small intestine, prostate, thymus and spleen.

It is found in the secreted. It localises to the nucleus. Functionally, activator of the canonical Wnt signaling pathway by acting as a ligand for LGR4-6 receptors. Upon binding to LGR4-6 (LGR4, LGR5 or LGR6), LGR4-6 associate with phosphorylated LRP6 and frizzled receptors that are activated by extracellular Wnt receptors, triggering the canonical Wnt signaling pathway to increase expression of target genes. Also regulates the canonical Wnt/beta-catenin-dependent pathway and non-canonical Wnt signaling by acting as an inhibitor of ZNRF3, an important regulator of the Wnt signaling pathway. Acts as a ligand for frizzled FZD8 and LRP6. May negatively regulate the TGF-beta pathway. Has a essential roles in ovary determination. Regulates Wnt signaling by antagonizing DKK1/KREM1-mediated internalization of LRP6 through an interaction with KREM1. This Homo sapiens (Human) protein is R-spondin-1 (RSPO1).